The following is a 701-amino-acid chain: CRS2-associated factor 1, chloroplastic (701 aa).

Residues 1–77 constitute a chloroplast transit peptide; sequence MATSHLTSRS…ENGEPAAGVR (77 aa). CRM domains are found at residues 183 to 279 and 301 to 397; these read EPLT…TRPI and DGLT…LPPL. The segment at 581–603 is CRS2 binding; it reads GILLLFKQAIDSGMALVLNENEF.

As to quaternary structure, interacts with CRS2 and RNA. Part of large ribonucleo-protein complexes that include group IIB introns, CRS2 and CAF1.

It is found in the plastid. Its subcellular location is the chloroplast stroma. Its function is as follows. Required for the splicing of group IIB introns in chloroplasts. Forms splicing particles with CRS2. Interacts with RNA and confers intron specificity of the splicing particles. In Oryza sativa subsp. japonica (Rice), this protein is CRS2-associated factor 1, chloroplastic.